Consider the following 224-residue polypeptide: Thiamine-triphosphatase (224 aa).

A2 bears the N-acetylalanine mark. The CYTH domain maps to 5–201 (LIEVERKFAP…AKLMVYLQRF (197 aa)). Mg(2+) is bound by residues E7 and E9. Substrate is bound by residues K11, R55, R57, K65, and R125. Positions 145, 157, and 159 each coordinate Mg(2+). Residue E157 participates in substrate binding. Substrate is bound at residue K193.

Belongs to the ThTPase family. As to quaternary structure, monomer. It depends on Mg(2+) as a cofactor.

It is found in the cytoplasm. It carries out the reaction thiamine triphosphate + H2O = thiamine diphosphate + phosphate + H(+). Hydrolase highly specific for thiamine triphosphate (ThTP). This Mus musculus (Mouse) protein is Thiamine-triphosphatase (Thtpa).